The chain runs to 122 residues: Basic phospholipase A2 (122 aa).

7 cysteine pairs are disulfide-bonded: cysteine 26-cysteine 115, cysteine 28-cysteine 44, cysteine 43-cysteine 95, cysteine 49-cysteine 122, cysteine 50-cysteine 88, cysteine 57-cysteine 81, and cysteine 75-cysteine 86. Ca(2+) contacts are provided by tyrosine 27, glycine 29, and glycine 31. The active site involves histidine 47. Aspartate 48 contacts Ca(2+). Residue aspartate 89 is part of the active site.

This sequence belongs to the phospholipase A2 family. Group II subfamily. D49 sub-subfamily. Ca(2+) is required as a cofactor. As to expression, expressed by the venom gland.

Its subcellular location is the secreted. The catalysed reaction is a 1,2-diacyl-sn-glycero-3-phosphocholine + H2O = a 1-acyl-sn-glycero-3-phosphocholine + a fatty acid + H(+). Functionally, snake venom phospholipase A2 (PLA2) that does not inhibit platelet aggregation. Exhibits cytotoxic and anticoagulant activity. Induces Ehrlich tumor growth but not angiogenesis. PLA2 catalyzes the calcium-dependent hydrolysis of the 2-acyl groups in 3-sn-phosphoglycerides. This chain is Basic phospholipase A2, found in Bothrops leucurus (Whitetail lancehead).